We begin with the raw amino-acid sequence, 162 residues long: Putative pre-16S rRNA nuclease (162 aa).

This sequence belongs to the YqgF nuclease family.

Its subcellular location is the cytoplasm. Its function is as follows. Could be a nuclease involved in processing of the 5'-end of pre-16S rRNA. The chain is Putative pre-16S rRNA nuclease from Brucella melitensis biotype 1 (strain ATCC 23456 / CCUG 17765 / NCTC 10094 / 16M).